The chain runs to 109 residues: uncharacterized protein (109 aa).

A helical transmembrane segment spans residues 87–106 (WCSVGTAAAVGIFIGALLSM).

This sequence belongs to the ElaB/YgaM/YqjD family. May bind to ribosomes.

It is found in the cell inner membrane. This is an uncharacterized protein from Escherichia coli O157:H7.